Here is a 69-residue protein sequence, read N- to C-terminus: Amphipathic peptide Hp1404 (69 aa).

Positions 1–23 (MKTQFAILMITVVLMQMLVQTEG) are cleaved as a signal peptide. Phenylalanine amide is present on Phe37. Positions 41–69 (GLKNLDQLDDSFDSDLSDADVKLLREMFK) are excised as a propeptide.

Belongs to the non-disulfide-bridged peptide (NDBP) superfamily. Short antimicrobial peptide (group 4) family. Expressed by the venom gland.

It is found in the secreted. Its subcellular location is the target cell membrane. With respect to regulation, antibacterial activity is decreased by serum. In terms of biological role, antimicrobial peptide that acts by inducing concentration-dependent membrane disruption, implying a membrane-lytic mode of action. Acts with potent activity against Gram-positive bacteria (MIC=4.04-16.16 uM) including methicillin-resistant S.aureus (MRSA). Its activity on Gram-negative bacteria is controversial. Li and colleagues (2014) describe no activity towards E.coli and P.aeruginosa, while Kim and colleagues (2018) describe a potent activity towards P.aeruginosa (MIC=3.13-12.5 uM), and Luo and colleagues (2021) describe a potent activity against antibiotic-sensitive and -resistant Acinetobacter baumannii strains (MIC=3.2-10 uM). On S.aureus, possibly acts by impairing an unknown intracellular target and/or by interacting with the membrane, leading to the lateral expansion of the membrane area at high MIC concentrations, resulting in the formation of mesosome-like structures that leads to cell lysis. Shows moderate inhibition of P.aeruginosa biofilm formation. Administration of this peptide at sub-MIC concentrations in multiple treatments does not lead to resistance in S.aureus. Exhibits low toxicity and hemolytic activity against mammalian cell lines and BALB/c mice. In vivo, improves the survival rate of the MRSA infected BALB/c mice in the peritonitis model. This chain is Amphipathic peptide Hp1404, found in Heterometrus petersii (Asian forest scorpion).